A 1178-amino-acid polypeptide reads, in one-letter code: Thrombospondin-2 (1178 aa).

Residues 1–22 (MLQRSRLLWLAVFITLWVSSDA) form the signal peptide. The Laminin G-like domain occupies 25 to 221 (DAKEEENTFD…LQNIHLIFDT (197 aa)). Residues Asn-157, Asn-244, Asn-317, and Asn-322 are each glycosylated (N-linked (GlcNAc...) asparagine). A VWFC domain is found at 324–381 (SVCWQDGRVFADSESWIVDSCTKCTCQDSKIVCHQITCPPVSCADPSFIEGECCPVCS). 3 TSP type-1 domains span residues 387-437 (EEGW…KKCD), 443-498 (DGGW…APCP), and 500-555 (NGQW…RDCP). 27 cysteine pairs are disulfide-bonded: Cys-399–Cys-431, Cys-403–Cys-436, Cys-414–Cys-421, Cys-455–Cys-492, Cys-459–Cys-497, Cys-470–Cys-482, Cys-512–Cys-549, Cys-516–Cys-554, Cys-527–Cys-539, Cys-559–Cys-570, Cys-564–Cys-580, Cys-583–Cys-594, Cys-600–Cys-616, Cys-607–Cys-625, Cys-628–Cys-652, Cys-658–Cys-671, Cys-665–Cys-684, Cys-686–Cys-697, Cys-713–Cys-721, Cys-726–Cys-746, Cys-762–Cys-782, Cys-785–Cys-805, Cys-821–Cys-841, Cys-844–Cys-864, Cys-882–Cys-902, Cys-918–Cys-938, and Cys-954–Cys-1175. N-linked (GlcNAc...) asparagine glycosylation is present at Asn-463. An EGF-like 1 domain is found at 555–595 (PIDGCLSNPCFPGAECNSYPDGSWSCGPCPAGFLGNGTVCE). Asn-590 is a glycosylation site (N-linked (GlcNAc...) asparagine). An EGF-like 2 domain is found at 654–698 (PENPCKDKTHSCHKSAECIYLGHFSDPMYKCECRTGYAGDGRICG). TSP type-3 repeat units lie at residues 699-734 (EDSD…NSGQ), 735-770 (EDFD…NPRQ), 771-793 (FDYD…NPAQ), 794-829 (IDTD…NTDQ), 830-852 (SDTD…NPDQ), 853-890 (TDAD…NANQ), 891-926 (ADHD…NPEQ), and 927-962 (EDSD…AISE). Asn-716 carries an N-linked (GlcNAc...) asparagine glycan. Residues 737–760 (FDKDGKGDACDEDDDNDGVEDDKD) form a disordered region. The segment covering 746-759 (CDEDDDNDGVEDDK) has biased composition (acidic residues). Residues 852-941 (QTDADNDLVG…DGRGDICKDD (90 aa)) are disordered. Acidic residues predominate over residues 853-872 (TDADNDLVGDQCDNNEDIDE). The segment covering 891 to 901 (ADHDKDGKGDA) has biased composition (basic and acidic residues). Residues 902-911 (CDPDDDNDGI) are compositionally biased toward acidic residues. 2 stretches are compositionally biased toward basic and acidic residues: residues 912–924 (PDDR…RYNP) and 931–940 (GDGRGDICKD). Positions 934-936 (RGD) match the Cell attachment site motif. In terms of domain architecture, TSP C-terminal spans 966–1178 (RKFQMVPLDP…SDLKYECRDA (213 aa)). An N-linked (GlcNAc...) asparagine glycan is attached at Asn-1075.

This sequence belongs to the thrombospondin family. As to quaternary structure, homotrimer; disulfide-linked. Can bind to fibrinogen, fibronectin, laminin and type V collagen.

Its function is as follows. Adhesive glycoprotein that mediates cell-to-cell and cell-to-matrix interactions. This chain is Thrombospondin-2 (THBS2), found in Gallus gallus (Chicken).